Here is a 104-residue protein sequence, read N- to C-terminus: Pyrimidine/purine nucleoside phosphorylase (104 aa).

It belongs to the nucleoside phosphorylase PpnP family.

It catalyses the reaction a purine D-ribonucleoside + phosphate = a purine nucleobase + alpha-D-ribose 1-phosphate. The enzyme catalyses adenosine + phosphate = alpha-D-ribose 1-phosphate + adenine. It carries out the reaction cytidine + phosphate = cytosine + alpha-D-ribose 1-phosphate. The catalysed reaction is guanosine + phosphate = alpha-D-ribose 1-phosphate + guanine. It catalyses the reaction inosine + phosphate = alpha-D-ribose 1-phosphate + hypoxanthine. The enzyme catalyses thymidine + phosphate = 2-deoxy-alpha-D-ribose 1-phosphate + thymine. It carries out the reaction uridine + phosphate = alpha-D-ribose 1-phosphate + uracil. The catalysed reaction is xanthosine + phosphate = alpha-D-ribose 1-phosphate + xanthine. Catalyzes the phosphorolysis of diverse nucleosides, yielding D-ribose 1-phosphate and the respective free bases. Can use uridine, adenosine, guanosine, cytidine, thymidine, inosine and xanthosine as substrates. Also catalyzes the reverse reactions. This Geotalea uraniireducens (strain Rf4) (Geobacter uraniireducens) protein is Pyrimidine/purine nucleoside phosphorylase.